Reading from the N-terminus, the 155-residue chain is Small ribosomal subunit protein uS7c (155 aa).

The protein belongs to the universal ribosomal protein uS7 family. As to quaternary structure, part of the 30S ribosomal subunit.

It localises to the plastid. Its subcellular location is the chloroplast. One of the primary rRNA binding proteins, it binds directly to 16S rRNA where it nucleates assembly of the head domain of the 30S subunit. In Cornus mas (Cornelian cherry dogwood), this protein is Small ribosomal subunit protein uS7c (rps7).